Reading from the N-terminus, the 450-residue chain is Cyclic GMP-AMP phosphodiesterase SMPDL3A (450 aa).

The N-terminal stretch at 1–22 (MARLGALVCCLLAAWHCRPGLG) is a signal peptide. The Zn(2+) site is built by D42 and H44. C59 and C78 form a disulfide bridge. D107 is a binding site for Zn(2+). H111 contributes to the ATP binding site. N-linked (GlcNAc...) asparagine glycosylation is found at N124 and N128. A Zn(2+)-binding site is contributed by N148. 2 residues coordinate ATP: N148 and H149. N-linked (GlcNAc...) asparagine glycans are attached at residues N219 and N235. H249, H290, and H292 together coordinate Zn(2+). N-linked (GlcNAc...) asparagine glycosylation is found at N353 and N370. 2 disulfides stabilise this stretch: C417/C421 and C427/C440.

The protein belongs to the acid sphingomyelinase family. In terms of assembly, monomer. Homodimer; homodimerizes following 2',3'-cGAMP-binding. Zn(2+) serves as cofactor.

The protein resides in the secreted. The enzyme catalyses 2',3'-cGAMP + H2O = 5'-pGpA(2'-5') + H(+). It carries out the reaction 5'-pGpA(2'-5') + H2O = 5'-GpA(2'-5') + phosphate. The catalysed reaction is a ribonucleoside 5'-triphosphate + H2O = a ribonucleoside 5'-diphosphate + phosphate + H(+). It catalyses the reaction ATP + H2O = ADP + phosphate + H(+). Functionally, cyclic-nucleotide phosphodiesterase that acts as a negative regulator of innate immunity by mediating degradation of 2',3'-cGAMP, thereby inhibiting the cGAS-STING signaling. Specifically linearizes 2',3'-cGAMP into 2'5'-bond pGpA and further hydrolyzes pGpA to produce GpA. Also has in vitro nucleotide phosphodiesterase activity with nucleoside triphosphates, such as ATP. Has in vitro activity with p-nitrophenyl-TMP. Has lower activity with nucleoside diphosphates, and no activity with nucleoside monophosphates. Has in vitro activity with CDP-choline, giving rise to CMP and phosphocholine. Has in vitro activity with CDP-ethanolamine. Does not have sphingomyelin phosphodiesterase activity. The polypeptide is Cyclic GMP-AMP phosphodiesterase SMPDL3A (SMPDL3A) (Bos taurus (Bovine)).